We begin with the raw amino-acid sequence, 70 residues long: Cold shock-like protein CspF (70 aa).

A CSD domain is found at 7-67 (GIVKTFDGKS…GLRGPSAANV (61 aa)).

It is found in the cytoplasm. The sequence is that of Cold shock-like protein CspF (cspF) from Escherichia coli (strain K12).